The following is a 431-amino-acid chain: Glucose-1-phosphate adenylyltransferase (431 aa).

Lys39 lines the beta-D-fructose 1,6-bisphosphate pocket. 3 residues coordinate AMP: Arg40, His46, and Arg52. Residues Tyr114, Gly179, 194–195, and Ser212 contribute to the alpha-D-glucose 1-phosphate site; that span reads EK. Positions 370 and 386 each coordinate AMP. Beta-D-fructose 1,6-bisphosphate is bound by residues 419–423 and 429–431; these read REMLR and QER.

It belongs to the bacterial/plant glucose-1-phosphate adenylyltransferase family. In terms of assembly, homotetramer.

The catalysed reaction is alpha-D-glucose 1-phosphate + ATP + H(+) = ADP-alpha-D-glucose + diphosphate. The protein operates within glycan biosynthesis; glycogen biosynthesis. Allosterically activated by fructose-1,6-bisphosphate (F16BP) and inhibited by AMP. In terms of biological role, involved in the biosynthesis of ADP-glucose, a building block required for the elongation reactions to produce glycogen. Catalyzes the reaction between ATP and alpha-D-glucose 1-phosphate (G1P) to produce pyrophosphate and ADP-Glc. This is Glucose-1-phosphate adenylyltransferase from Salmonella typhi.